We begin with the raw amino-acid sequence, 288 residues long: Serine/threonine-protein acetyltransferase YopJ (288 aa).

Catalysis depends on residues His109 and Glu128. His109 serves as a coordination point for CoA. Residue Arg167 to Ser168 participates in CoA binding. Cys172 is a catalytic residue. 1D-myo-inositol hexakisphosphate is bound by residues Lys182 to Ile185 and Lys224 to His225. Gln227–Lys230 provides a ligand contact to CoA. Arg257 is a 1D-myo-inositol hexakisphosphate binding site. Asp266–Leu270 is a CoA binding site.

This sequence belongs to the acetyltransferase YopJ family. Requires 1D-myo-inositol hexakisphosphate as cofactor.

The protein localises to the secreted. The catalysed reaction is L-threonyl-[protein] + acetyl-CoA = O-acetyl-L-threonyl-[protein] + CoA. The enzyme catalyses L-seryl-[protein] + acetyl-CoA = O-acetyl-L-seryl-[protein] + CoA. Its activity is regulated as follows. 1D-myo-inositol hexakisphosphate activates protein-acetyltransferase activity via an allosteric mechanism: 1D-myo-inositol hexakisphosphate-binding induces a conformational rearrangement that stimulates the interaction with acetyl-CoA. In terms of biological role, serine/threonine-protein acetyltransferase translocated into infected cells, which inhibits the host immune response and induces cell death by mediating acetylation of target proteins. Inhibits the MAPK and NF-kappa-B signaling pathways by acetylating protein-kinases such as MAP2K1, MAP2K6, MAP3K7/TAK1 and I-kappa-B kinase (CHUK/IKKA and IKBKB) on serine and threonine residues critical for their activation by phosphorylation, thereby preventing protein-kinase activation. Promotes pyroptosis, a programmed cell death, in host cells by mediating acetylation of MAP3K7/TAK1: MAP3K7/TAK1 inactivation triggers activation of caspase-8 (CASP8), followed by CASP8-dependent cleavage of gasdermin-D (GSDMD) and induction of pyroptosis. The sequence is that of Serine/threonine-protein acetyltransferase YopJ from Yersinia pestis.